A 663-amino-acid polypeptide reads, in one-letter code: MSPKAVVFAYHDIGCVGLQALLGAGYEIAAVFTHADDPKEKTFFGSVAQLCARHGIPVHAPEDPNHPLWVERIDKLAPDFIFSFYYRQLLGDPLLACAKKGALNLHGSLLPRYRGRAPANWVLVNGESETGVTLHQMVKRADAGPIVAQQRVSISSTDTALTLHGKLREAAADLLSETLPLLALGQLSGTPQDETRASCFGRRTPADGLIDWSLPATQLYNLIRAVTQPYPGAFCAVGENKLIVWAASAEAGNNGEAPGTVISHDPLRIACGEGSLVINAGQRGDNGLYLSGAQLAREFGLVEGSQLLDTEKRRPARRTRVLILGVNGFIGNHLSERLLQDDRYDIYGMDIGSDAIERLRTKPNFHFIEGDISIHTEWIEYHIKKCDVVLPLVAIATPIEYTRNPLRVFELDFEENLKIVRYCVKYNKRVIFPSTSEVYGMCQDASFNEDTSNLIVGPINKQRWIYSVSKQLLDRVIWAYGQKGLQFTLFRPFNWMGPRLDRLDSARIGSSRAITQLILHLVEGTPIRLVDGGAQKRCFTDVADGIEALARIIENRDGCCNGQIINIGNPDNEASIRQLGEELLRQFEAHPLRGNFPPFAGFREVESQSFYGKGYQDVSHRKPSIDNARQLIGWTPGIELSETIGKTLDFFLREAMAEKADMR.

The segment at 1–307 (MSPKAVVFAY…EFGLVEGSQL (307 aa)) is formyltransferase ArnAFT. His106 functions as the Proton donor; for formyltransferase activity in the catalytic mechanism. (6R)-10-formyltetrahydrofolate-binding positions include Arg116 and 138–142 (VKRAD). Positions 317–663 (RRTRVLILGV…EAMAEKADMR (347 aa)) are dehydrogenase ArnADH. NAD(+) is bound by residues Asp350 and 371-372 (DI). UDP-alpha-D-glucuronate-binding positions include Ala396, Tyr401, and 435–436 (TS). The active-site Proton acceptor; for decarboxylase activity is Glu437. UDP-alpha-D-glucuronate is bound by residues Arg463, Asn494, 528–537 (RLVDGGAQKR), and Tyr615. Catalysis depends on Arg621, which acts as the Proton donor; for decarboxylase activity.

This sequence in the N-terminal section; belongs to the Fmt family. UDP-L-Ara4N formyltransferase subfamily. In the C-terminal section; belongs to the NAD(P)-dependent epimerase/dehydratase family. UDP-glucuronic acid decarboxylase subfamily. In terms of assembly, homohexamer, formed by a dimer of trimers.

It catalyses the reaction UDP-alpha-D-glucuronate + NAD(+) = UDP-beta-L-threo-pentopyranos-4-ulose + CO2 + NADH. The enzyme catalyses UDP-4-amino-4-deoxy-beta-L-arabinose + (6R)-10-formyltetrahydrofolate = UDP-4-deoxy-4-formamido-beta-L-arabinose + (6S)-5,6,7,8-tetrahydrofolate + H(+). It functions in the pathway nucleotide-sugar biosynthesis; UDP-4-deoxy-4-formamido-beta-L-arabinose biosynthesis; UDP-4-deoxy-4-formamido-beta-L-arabinose from UDP-alpha-D-glucuronate: step 1/3. It participates in nucleotide-sugar biosynthesis; UDP-4-deoxy-4-formamido-beta-L-arabinose biosynthesis; UDP-4-deoxy-4-formamido-beta-L-arabinose from UDP-alpha-D-glucuronate: step 3/3. The protein operates within bacterial outer membrane biogenesis; lipopolysaccharide biosynthesis. Its function is as follows. Bifunctional enzyme that catalyzes the oxidative decarboxylation of UDP-glucuronic acid (UDP-GlcUA) to UDP-4-keto-arabinose (UDP-Ara4O) and the addition of a formyl group to UDP-4-amino-4-deoxy-L-arabinose (UDP-L-Ara4N) to form UDP-L-4-formamido-arabinose (UDP-L-Ara4FN). The modified arabinose is attached to lipid A and is required for resistance to polymyxin and cationic antimicrobial peptides. In Pseudomonas savastanoi pv. phaseolicola (strain 1448A / Race 6) (Pseudomonas syringae pv. phaseolicola (strain 1448A / Race 6)), this protein is Bifunctional polymyxin resistance protein ArnA.